A 114-amino-acid polypeptide reads, in one-letter code: MSNDNILKNIHEINLSYLLLAQELIKQDKKVASFRLGVCEDTLNKISKLSLSELIKLGAINQLICLLRLDDEKVINCLTRESRVDELQQVHTGIMLSTQLLRSHKSNSNHALKE.

This sequence belongs to the FlhD family. In terms of assembly, homodimer; disulfide-linked. Forms a heterohexamer composed of two FlhC and four FlhD subunits. Each FlhC binds a FlhD dimer, forming a heterotrimer, and a hexamer assembles by dimerization of two heterotrimers.

The protein localises to the cytoplasm. In terms of biological role, functions in complex with FlhC as a master transcriptional regulator that regulates transcription of several flagellar and non-flagellar operons by binding to their promoter region. Activates expression of class 2 flagellar genes, including fliA, which is a flagellum-specific sigma factor that turns on the class 3 genes. Also regulates genes whose products function in a variety of physiological pathways. The sequence is that of Flagellar transcriptional regulator FlhD from Wigglesworthia glossinidia brevipalpis.